The following is a 228-amino-acid chain: MAAQPQDREGGAQLAGPAAEADPLGRFTCPVCLEVYEKPVQVPCGHVFCSACLQECLKPKKPVCGVCRSTLAPGVRAVELERQIESTETSCHGCRKNFFLSKIRAHVATCSKYQNYIMEGVKATTKDASLQPRNVPNRYTFPCPYCPEKNFDQEGLVEHCKLVHSTDTKSVVCPICASMPWGDPNYRSANFIEHIQRRHQFSYDTFVDYDVDEEDMMNQVLQRSLLDQ.

The RING-type zinc-finger motif lies at 29-68 (CPVCLEVYEKPVQVPCGHVFCSACLQECLKPKKPVCGVCR). Residues Cys91 and Cys94 each contribute to the Zn(2+) site. Residues 91 to 110 (CHGCRKNFFLSKIRAHVATC) form a C2HC RNF-type zinc finger. An N6-acetyllysine modification is found at Lys102. Zn(2+)-binding residues include His106 and Cys110. Lys112 carries the post-translational modification N6-acetyllysine.

In terms of assembly, interacts with XAF1, the interaction increases XAF1 stability and proapoptotic effects, and may regulate IFN signaling. Autoubiquitinated. Polyubiquitinated in the presence of E2 enzymes UBE2D1, UBE2D2 and UBE2D3, but only monoubiquitinated in the presence of UBE2E1.

It localises to the cytoplasm. Its subcellular location is the nucleus. The enzyme catalyses S-ubiquitinyl-[E2 ubiquitin-conjugating enzyme]-L-cysteine + [acceptor protein]-L-lysine = [E2 ubiquitin-conjugating enzyme]-L-cysteine + N(6)-ubiquitinyl-[acceptor protein]-L-lysine.. Its pathway is protein modification; protein ubiquitination. E3 ubiquitin-protein ligase that promotes the ubiquitination of various substrates. In turn, participates in the regulation of many biological processes including cell cycle, apoptosis, osteoclastogenesis as well as innate or adaptive immunity. Acts as negative regulator of NF-kappa-B-dependent transcription by promoting the ubiquitination and stabilization of the NF-kappa-B inhibitor TNFAIP3. May promote the ubiquitination of TRAF6 as well. Also acts as a negative regulator of T-cell activation. Inhibits cellular dsRNA responses and interferon production by targeting MAVS component for proteasomal degradation. Ubiquitinates the CDK inhibitor CDKN1A leading to its degradationand probably also CDKN1B and CDKN1C. This activity stimulates cell cycle G1-to-S phase transition and suppresses cellular senescence. May play a role in spermatogenesis. Inhibits classical swine fever virus replication by mediating 'K27'-linked ubiquitination of viral NS4B and inducing its degradation via the proteasome. In Sus scrofa (Pig), this protein is E3 ubiquitin-protein ligase RNF114 (RNF114).